A 111-amino-acid polypeptide reads, in one-letter code: Large ribosomal subunit protein uL22 (111 aa).

It belongs to the universal ribosomal protein uL22 family. As to quaternary structure, part of the 50S ribosomal subunit.

This protein binds specifically to 23S rRNA; its binding is stimulated by other ribosomal proteins, e.g. L4, L17, and L20. It is important during the early stages of 50S assembly. It makes multiple contacts with different domains of the 23S rRNA in the assembled 50S subunit and ribosome. In terms of biological role, the globular domain of the protein is located near the polypeptide exit tunnel on the outside of the subunit, while an extended beta-hairpin is found that lines the wall of the exit tunnel in the center of the 70S ribosome. The polypeptide is Large ribosomal subunit protein uL22 (Mycoplasma mycoides subsp. mycoides SC (strain CCUG 32753 / NCTC 10114 / PG1)).